Here is a 614-residue protein sequence, read N- to C-terminus: Phragmoplastin DRP1C (614 aa).

Positions 32 to 301 (WEALPTVAVV…LETVIRQKIP (270 aa)) constitute a Dynamin-type G domain. A G1 motif region spans residues 42–49 (GGQSSGKS). Position 45 to 50 (45 to 50 (SSGKSS)) interacts with GTP. The segment at 68-70 (VTR) is G2 motif. The interval 143-146 (DLPG) is G3 motif. The segment at 212–215 (TKLD) is G4 motif. GTP-binding positions include 213-218 (KLDIMD) and 243-246 (NRSQ). Positions 242 to 245 (VNRS) are G5 motif. A disordered region spans residues 499–519 (EPEKEKPNPRNAPAPNADPYS). Residues 507–517 (PRNAPAPNADP) show a composition bias toward low complexity. A GED domain is found at 523 to 614 (FRKIGSNVSA…RDDIDAVAWK (92 aa)).

Belongs to the TRAFAC class dynamin-like GTPase superfamily. Dynamin/Fzo/YdjA family. Forms homodimer and may homooligomerize and heterooligomerize to form the phragmoplastin complex. Binds to PHIP1. Ubiquitous.

It localises to the cytoplasm. It is found in the cytoskeleton. The protein localises to the cell cortex. Its subcellular location is the cytoplasmic vesicle. The protein resides in the clathrin-coated vesicle. It localises to the phragmoplast. The enzyme catalyses GTP + H2O = GDP + phosphate + H(+). Functionally, microtubule-associated force-producing protein that is targeted to the growing edges of the cell plate during cytokinesis. Also plays a major role in plasma membrane maintenance during pollen maturation. Has a GTPase activity. This Arabidopsis thaliana (Mouse-ear cress) protein is Phragmoplastin DRP1C.